A 318-amino-acid chain; its full sequence is MVVNCFETCRAIDFWNRRNQLNFPGIVRLEHHQVILKPFNGTWENSEKPENQRKNRYNIRCWDHNRVILKSGSGSTSNYIHANYVDGFEDDKKFIITQGPMEETCNDFWKAVWQNNCSIIVMLTPTKGTNGEELCYQYWSLNEDSNIITEDFVIETVNTSVRPTYILTTLRITDKISNDSRRISHYQYTEWPVDETPTNHVDFIKFIKIININRKKSGSNYQQQLLSPIVVHCSDGVKKTGIFCAVDISLNQLVLRKTVSLAKTAEKIRQQRHSTISTPDDYLILQPGYYVLLYLLYKILAIIKIKNCGEKKSRRKST.

Positions 26–292 (IVRLEHHQVI…LILQPGYYVL (267 aa)) constitute a Tyrosine-protein phosphatase domain. The active-site Phosphocysteine intermediate is the Cys233.

It belongs to the protein-tyrosine phosphatase family.

It carries out the reaction O-phospho-L-tyrosyl-[protein] + H2O = L-tyrosyl-[protein] + phosphate. This chain is Probable tyrosine phosphatase protein N1 (N3), found in Microplitis demolitor bracovirus (isolate Webb) (MdBV).